We begin with the raw amino-acid sequence, 269 residues long: Ice-binding protein (269 aa).

The signal sequence occupies residues methionine 1–alanine 24. 7 short sequence motifs (probable ice-binding motif (T/S-X-T)) span residues threonine 45 to threonine 47, serine 65 to threonine 67, serine 128 to glutamine 130, threonine 154 to threonine 156, serine 180 to threonine 182, serine 198 to threonine 200, and alanine 218 to threonine 220. Residues valine 240–lysine 263 form a PEP C-terminal anchor region. A helical membrane pass occupies residues serine 245–phenylalanine 261.

The protein belongs to the ice-binding protein family.

It localises to the cell outer membrane. A probable ice-binding protein that has ice-structuring activities in vitro. Thought not to anchor the cyanobacterium to ice surfaces, as its habitat is shallow puddles fed by glacier meltwater. This is Ice-binding protein from Nostoc sp. (strain HG1).